A 268-amino-acid polypeptide reads, in one-letter code: tRNA threonylcarbamoyladenosine dehydratase (268 aa).

A helical transmembrane segment spans residues glycine 237–leucine 257.

This sequence belongs to the HesA/MoeB/ThiF family. As to quaternary structure, interacts with CsdE.

The protein localises to the membrane. Its function is as follows. Catalyzes the ATP-dependent dehydration of threonylcarbamoyladenosine at position 37 (t(6)A37) to form cyclic t(6)A37 (ct(6)A37) in tRNAs that read codons beginning with adenine. TcdA is also part of a sulfur transfer pathway; is able to accept sulfur from CsdA directly in vitro, but CsdE might act as the sulfur donor in vivo. This Escherichia coli (strain K12) protein is tRNA threonylcarbamoyladenosine dehydratase (tcdA).